The sequence spans 237 residues: UPF0174 protein YaaW (237 aa).

This sequence belongs to the UPF0174 family.

This is UPF0174 protein YaaW from Escherichia coli O157:H7.